An 831-amino-acid chain; its full sequence is Translation initiation factor IF-2 (831 aa).

The tr-type G domain maps to T329–K499. Residues G338–T345 form a G1 region. A GTP-binding site is contributed by G338–T345. Residues G363–H367 are G2. Positions D385–G388 are G3. GTP contacts are provided by residues D385–H389 and N439–D442. A G4 region spans residues N439–D442. Residues S475–L477 are G5.

The protein belongs to the TRAFAC class translation factor GTPase superfamily. Classic translation factor GTPase family. IF-2 subfamily.

Its subcellular location is the cytoplasm. In terms of biological role, one of the essential components for the initiation of protein synthesis. Protects formylmethionyl-tRNA from spontaneous hydrolysis and promotes its binding to the 30S ribosomal subunits. Also involved in the hydrolysis of GTP during the formation of the 70S ribosomal complex. In Rickettsia rickettsii (strain Iowa), this protein is Translation initiation factor IF-2.